A 435-amino-acid polypeptide reads, in one-letter code: Apparent malate synthase (435 aa).

Residues Glu159 and Asn180 each coordinate Mg(2+). Glu159 lines the substrate pocket.

It belongs to the HpcH/HpaI aldolase family. Requires Mg(2+) as cofactor. Mn(2+) is required as a cofactor. It depends on Co(2+) as a cofactor. The cofactor is Ca(2+).

The catalysed reaction is (S)-malyl-CoA = glyoxylate + acetyl-CoA. It carries out the reaction (S)-malyl-CoA + H2O = (S)-malate + CoA + H(+). Involved in the methylaspartate cycle. Catalyzes the biosynthesis of malate in two steps. In the first reaction acetyl-CoA is condensed reversibly with glyoxylate to form (S)-malyl-CoA. In the second reaction (S)-malyl-CoA is hydrolyzed to malate and CoA. It can also catalyze the condensation of propionyl-CoA with glyoxylate and of acetyl-CoA with pyruvate, however the CoA-ester hydrolysis reaction is highly specific for (S)-malyl-CoA. The sequence is that of Apparent malate synthase (aceB) from Haloarcula marismortui (strain ATCC 43049 / DSM 3752 / JCM 8966 / VKM B-1809) (Halobacterium marismortui).